A 125-amino-acid polypeptide reads, in one-letter code: MGLTGTMLVLVSLAFFGSAAAHNCQNGTRPASEQDREGCDYYCWNAETKSWDQFFFGNGEKCFYNSGDHGTCQNGECHLTNNSGGPNETDDYTPAPTEKPKQKKKKTKKTKKPKRKSKKDQEKNL.

The first 21 residues, 1-21 (MGLTGTMLVLVSLAFFGSAAA), serve as a signal peptide directing secretion. Residues N26, N81, and N87 are each glycosylated (N-linked (GlcNAc...) asparagine). Residues 75–86 (GECHLTNNSGGP) show a composition bias toward polar residues. Positions 75 to 125 (GECHLTNNSGGPNETDDYTPAPTEKPKQKKKKTKKTKKPKRKSKKDQEKNL) are disordered. Residues 91–125 (DYTPAPTEKPKQKKKKTKKTKKPKRKSKKDQEKNL) are responsible for anticoagulant activity. The span at 101 to 118 (KQKKKKTKKTKKPKRKSK) shows a compositional bias: basic residues.

Belongs to the salp14 family. Salivary gland (at protein level). Saliva (at protein level).

The protein resides in the secreted. Functionally, salivary anticoagulant protein that facilitates blood feeding of adult ticks on vertebrate species. Inhibits host coagulation factor Xa (F10). Blocks the assembly and/or early activity of the prothrombinase complex (Xa-Va/F10-F5). Inhibits the lectin pathway of complement system activation in the host. The protein is Anticoagulant salivary protein 14 of Ixodes scapularis (Black-legged tick).